The primary structure comprises 1099 residues: Sterol regulatory element-binding protein 2 (1099 aa).

A transcriptional activation (acidic) region spans residues 1 to 47 (MDASEFMDTMDPSLSELGDEFTLGDIDEMLQFVSNQVDFPDIFEDQM). Topologically, residues 1–461 (MDASEFMDTM…SCVGVMDRSR (461 aa)) are cytoplasmic. Residues 65–107 (LTPPHTPVQTSSQTHTQTLTQAHTQTHTQTHTQTRTPPVLQPR) are disordered. A compositionally biased stretch (low complexity) spans 71 to 100 (PVQTSSQTHTQTLTQAHTQTHTQTHTQTRT). The bHLH domain occupies 320-370 (ERRTTHNIIEKRYRSSINDKILELRDLVLGNDAKMHKSGVLRKAIDYIKYL). Residues 370–391 (LQQVNHKLRQENLTLKMANQKN) are leucine-zipper. The helical transmembrane segment at 462-482 (LLLCALSFLCLSLNPLPSLLG) threads the bilayer. The Lumenal portion of the chain corresponds to 483–513 (AEAPAGSPEVAGHGPTRTLFSLPAQTQSFGA). Residues 514–534 (WLWCVLPFLLVWVVSGVGVVW) traverse the membrane as a helical segment. Topologically, residues 535 to 1099 (GCVRVLYLWE…LSGGTTIAAS (565 aa)) are cytoplasmic.

It belongs to the SREBP family. Forms a tight complex with scap, the SCAP-SREBP complex, in the endoplasmic reticulum membrane. As to quaternary structure, homodimer; efficient DNA binding of the soluble transcription factor fragment requires dimerization with another bHLH protein. Post-translationally, processed in the Golgi apparatus, releasing the protein from the membrane. At low cholesterol the SCAP-SREBP complex is recruited into COPII vesicles for export from the endoplasmic reticulum. In the Golgi, complex SREBPs are cleaved sequentially by site-1 (mbtps1, S1P) and site-2 (mbtps2, S2P) protease. The first cleavage by site-1 protease occurs within the luminal loop, the second cleavage by site-2 protease occurs within the first transmembrane domain, releasing the transcription factor from the Golgi membrane.

It is found in the endoplasmic reticulum membrane. The protein resides in the golgi apparatus membrane. Its subcellular location is the cytoplasmic vesicle. The protein localises to the COPII-coated vesicle membrane. It localises to the nucleus. Functionally, precursor of the transcription factor form (Processed sterol regulatory element-binding protein 2), which is embedded in the endoplasmic reticulum membrane. Low sterol concentrations promote processing of this form, releasing the transcription factor form that translocates into the nucleus and activates transcription of genes involved in cholesterol biosynthesis. Its function is as follows. Key transcription factor that regulates expression of genes involved in cholesterol biosynthesis. Binds to the sterol regulatory element 1 (SRE-1) (5'-ATCACCCCAC-3'). Has dual sequence specificity binding to both an E-box motif (5'-ATCACGTGA-3') and to SRE-1 (5'-ATCACCCCAC-3'). Regulates transcription of genes related to cholesterol synthesis pathway. Activated by mediated cholesterol efflux, transactivates NOTCH and promotes hematopoietic stem and progenitor cell emergence. This Danio rerio (Zebrafish) protein is Sterol regulatory element-binding protein 2.